Consider the following 241-residue polypeptide: MSMTHTTPLVPKNVAIVPAAGIGARMAAGMPKQYLTLGAQSILGHTLDALLSHPQIAQVIVALHPHDDMFLGLPQAKHSKLLTVIGGGERADSVLAALAVAPQDAWALVHDAARPCLTHSDIDKLLASTSEFPQGAILAMPVRDTMKRSDDTGVINHTVDRALLWHALTPQYFPVAELLTNLSAALNAGVVITDEASAMEWAGVFPGLVSGRADNIKVTHPDDLHLAGLFMAHLSAKPLVE.

This sequence belongs to the IspD/TarI cytidylyltransferase family. IspD subfamily.

It catalyses the reaction 2-C-methyl-D-erythritol 4-phosphate + CTP + H(+) = 4-CDP-2-C-methyl-D-erythritol + diphosphate. It participates in isoprenoid biosynthesis; isopentenyl diphosphate biosynthesis via DXP pathway; isopentenyl diphosphate from 1-deoxy-D-xylulose 5-phosphate: step 2/6. In terms of biological role, catalyzes the formation of 4-diphosphocytidyl-2-C-methyl-D-erythritol from CTP and 2-C-methyl-D-erythritol 4-phosphate (MEP). This is 2-C-methyl-D-erythritol 4-phosphate cytidylyltransferase from Shewanella denitrificans (strain OS217 / ATCC BAA-1090 / DSM 15013).